A 573-amino-acid polypeptide reads, in one-letter code: CTP synthase (573 aa).

The interval 1–281 is amidoligase domain; it reads MGQTRIQART…DAYVVRRLGL (281 aa). Ser23 serves as a coordination point for CTP. Ser23 is a UTP binding site. ATP is bound by residues 24 to 29 and Asp81; that span reads SLGKGL. Mg(2+)-binding residues include Asp81 and Glu155. CTP contacts are provided by residues 162-164, 202-207, and Lys238; these read DIE and KTKPTQ. UTP is bound by residues 202–207 and Lys238; that span reads KTKPTQ. Positions 306 to 554 constitute a Glutamine amidotransferase type-1 domain; it reads EVALVGKYVD…IAAALKYKLA (249 aa). Gly369 contacts L-glutamine. The active-site Nucleophile; for glutamine hydrolysis is Cys396. Residues 397–400, Glu419, and Arg480 contribute to the L-glutamine site; that span reads LGLQ. Catalysis depends on residues His527 and Glu529.

It belongs to the CTP synthase family. In terms of assembly, homotetramer.

The catalysed reaction is UTP + L-glutamine + ATP + H2O = CTP + L-glutamate + ADP + phosphate + 2 H(+). The enzyme catalyses L-glutamine + H2O = L-glutamate + NH4(+). It carries out the reaction UTP + NH4(+) + ATP = CTP + ADP + phosphate + 2 H(+). The protein operates within pyrimidine metabolism; CTP biosynthesis via de novo pathway; CTP from UDP: step 2/2. Allosterically activated by GTP, when glutamine is the substrate; GTP has no effect on the reaction when ammonia is the substrate. The allosteric effector GTP functions by stabilizing the protein conformation that binds the tetrahedral intermediate(s) formed during glutamine hydrolysis. Inhibited by the product CTP, via allosteric rather than competitive inhibition. Catalyzes the ATP-dependent amination of UTP to CTP with either L-glutamine or ammonia as the source of nitrogen. Regulates intracellular CTP levels through interactions with the four ribonucleotide triphosphates. This chain is CTP synthase, found in Nocardia farcinica (strain IFM 10152).